Consider the following 698-residue polypeptide: G1/S-specific cyclin CCN1 (698 aa).

Low complexity predominate over residues 1–11; it reads MTSLQQQQQQQ. 5 disordered regions span residues 1–21, 277–326, 469–577, 599–619, and 659–698; these read MTSL…PHHI, QKKQ…DDED, DEDE…GSIL, SNSS…EKRY, and NNTN…QYHQ. Residues 277–302 show a composition bias toward polar residues; the sequence is QKKQKKAFSSNSSRTTTASYTHQNQS. Composition is skewed to acidic residues over residues 310 to 326 and 469 to 480; these read DEDI…DDED and DEDENVSTDDEA. Polar residues-rich tracts occupy residues 493-520 and 528-567; these read DGNN…NHPQ and PSAT…SSFA. Residues 659–669 show a composition bias toward polar residues; that stretch reads NNTNSSSPLMN. A compositionally biased stretch (low complexity) spans 670–690; the sequence is QQQQYYHQQQHQQQVTQSSLY.

It belongs to the cyclin family.

Functionally, essential for the control of the cell cycle at the G1/S (start) transition. Interacts with the CDC2 protein kinase to form MPF. The polypeptide is G1/S-specific cyclin CCN1 (CCN1) (Candida albicans (strain WO-1) (Yeast)).